Reading from the N-terminus, the 257-residue chain is UPF0246 protein YaaA (257 aa).

This sequence belongs to the UPF0246 family.

This chain is UPF0246 protein YaaA, found in Salmonella arizonae (strain ATCC BAA-731 / CDC346-86 / RSK2980).